The sequence spans 287 residues: Survival motor neuron protein (287 aa).

A disordered region spans residues 1-28 (MGGGGGGFPEPEDSVLFRRGTGESDDSD). The segment at 9–40 (PEPEDSVLFRRGTGESDDSDVWDDTALIKAYD) is P1 (binding site for GEMIN2). A Phosphothreonine modification is found at T21. Residues S24 and S27 each carry the phosphoserine modification. K47 is covalently cross-linked (Glycyl lysine isopeptide (Lys-Gly) (interchain with G-Cter in SUMO2)). Disordered regions lie at residues 51-86 (KNGD…PSKQ) and 149-221 (NAQE…PPPH). Residues 64-77 (GTPKRKSAKNKSQR) show a composition bias toward basic residues. Residue T65 is modified to Phosphothreonine. The residue at position 80 (T80) is a Phosphothreonine; by PKA. The 61-residue stretch at 86–146 (QWKVGDNCCA…LSPTSEVANI (61 aa)) folds into the Tudor domain. Positions 92–204 (NCCAIWSEDG…MPRSGLGPGK (113 aa)) are required for interaction with RPP20/POP7. Positions 149–160 (NAQENENESQIS) are enriched in low complexity. Residues 167–179 (SSRSPLNKPNNIR) are compositionally biased toward polar residues. Residue K204 forms a Glycyl lysine isopeptide (Lys-Gly) (interchain with G-Cter in SUMO2) linkage. Residues 211 to 221 (GPPPPPPPPPH) show a composition bias toward pro residues. The interval 234-261 (PPMIPPPPPICPDSLDDADALGSMLISW) is P2 (binding site for SM B). The required for interaction with SYNCRIP stretch occupies residues 273–287 (GFKQSQKEGRYSHFN).

This sequence belongs to the SMN family. Homooligomer; may form higher order homooligomers in the dimer to octamer range. Part of the core SMN complex that contains SMN1, GEMIN2/SIP1, DDX20/GEMIN3, GEMIN4, GEMIN5, GEMIN6, GEMIN7, GEMIN8 and STRAP/UNRIP. Part of the SMN-Sm complex that contains SMN1, GEMIN2/SIP1, DDX20/GEMIN3, GEMIN4, GEMIN5, GEMIN6, GEMIN7, GEMIN8, STRAP/UNRIP and the Sm proteins SNRPB, SNRPD1, SNRPD2, SNRPD3, SNRPE, SNRPF and SNRPG. Component of an import snRNP complex composed of KPNB1, RNUT1, SMN1 and ZNF259. Interacts with DDX20, FBL, NOLA1, RNUT1, SYNCRIP and with several spliceosomal snRNP core Sm proteins, including SNRPB, SNRPD1, SNRPD2, SNRPD3, SNRPE and ILF3. Interacts with GEMIN2; the interaction is direct. Interacts with GEMIN3; the interaction is direct. Interacts with GEMIN8; the interaction is direct. Interacts with SNRPB; the interaction is direct. Interacts (via Tudor domain) with SNRPD1 (via C-terminus); the interaction is direct. Interacts with SNRPD2; the interaction is direct. Interacts (via Tudor domain) with SNRPD3 (via C-terminus); the interaction is direct. Interacts with SNRPE; the interaction is direct. Interacts with OSTF1, LSM10, LSM11 and RPP20/POP7. Interacts (via C-terminal region) with ZPR1 (via C-terminal region). Interacts (via Tudor domain) with COIL. Interacts with SETX; recruits SETX to POLR2A. Interacts with POLR2A (via the C-terminal domain (CTD)). Interacts with PRMT5. Interacts with XRN2. Interacts (via C-terminus) with FMR1 (via C-terminus); the interaction is direct and occurs in a RNA-independent manner. Interacts (via Tudor domain) with SF3B2 ('Arg-508'-methylated form). Interacts with WRAP53/TCAB1. Interacts (via Tudor domain) with ELAVL4 in an RNA-independent manner; the interaction is required for localization of ELAVL4 to RNA granules. Interacts with FRG1.

It localises to the nucleus. Its subcellular location is the gem. It is found in the cajal body. The protein localises to the cytoplasm. The protein resides in the cytoplasmic granule. It localises to the perikaryon. Its subcellular location is the cell projection. It is found in the neuron projection. The protein localises to the axon. The protein resides in the myofibril. It localises to the sarcomere. Its subcellular location is the z line. Functionally, the SMN complex catalyzes the assembly of small nuclear ribonucleoproteins (snRNPs), the building blocks of the spliceosome, and thereby plays an important role in the splicing of cellular pre-mRNAs. Most spliceosomal snRNPs contain a common set of Sm proteins SNRPB, SNRPD1, SNRPD2, SNRPD3, SNRPE, SNRPF and SNRPG that assemble in a heptameric protein ring on the Sm site of the small nuclear RNA to form the core snRNP (Sm core). In the cytosol, the Sm proteins SNRPD1, SNRPD2, SNRPE, SNRPF and SNRPG are trapped in an inactive 6S pICln-Sm complex by the chaperone CLNS1A that controls the assembly of the core snRNP. To assemble core snRNPs, the SMN complex accepts the trapped 5Sm proteins from CLNS1A forming an intermediate. Binding of snRNA inside 5Sm ultimately triggers eviction of the SMN complex, thereby allowing binding of SNRPD3 and SNRPB to complete assembly of the core snRNP. Within the SMN complex, SMN1 acts as a structural backbone and together with GEMIN2 it gathers the Sm complex subunits. Ensures the correct splicing of U12 intron-containing genes that may be important for normal motor and proprioceptive neurons development. Also required for resolving RNA-DNA hybrids created by RNA polymerase II, that form R-loop in transcription terminal regions, an important step in proper transcription termination. May also play a role in the metabolism of small nucleolar ribonucleoprotein (snoRNPs). The protein is Survival motor neuron protein (SMN1) of Bos taurus (Bovine).